A 237-amino-acid chain; its full sequence is Probable glutathione-independent glyoxalase SNO4 (237 aa).

Catalysis depends on residues Cys-138, His-139, and Glu-170.

The protein belongs to the peptidase C56 family. HSP31-like subfamily. As to quaternary structure, homodimer.

It is found in the cytoplasm. The protein localises to the P-body. The enzyme catalyses methylglyoxal + H2O = (R)-lactate + H(+). Catalyzes the conversion of methylglyoxal (MG) to D-lactate in a single glutathione (GSH)-independent step. May play a role in detoxifying endogenously produced glyoxals. Involved in protection against reactive oxygen species (ROS). Important for viability in stationary phase. May negatively regulate TORC1 in response to nutrient limitation. The protein is Probable glutathione-independent glyoxalase SNO4 of Saccharomyces cerevisiae (strain ATCC 204508 / S288c) (Baker's yeast).